We begin with the raw amino-acid sequence, 365 residues long: MVVPTPFFVLRGHLSSVTSLSFVSDGILYSGDANGWMICWDLSVMRPTHIWRAHTKSILGVYGCSSEVVWTHGRDMQVARWHLNPPTGGSHIPLSLLHAIQQEKKNDQQSSSSLTIVSSVHKGYFFQTNNLTFCSFAISPAAGLLVVPNTVNAEQLDVYALNDTSDSDRRDNCGKRLQHALEPKPQIEKTGAVMSVALHVKYNKVVLVAGYESGHVVQYIADVDAAQKVNVYFQQVWQVMYAEKVHKEPVLSVVFGNDNGYLYSSSADDYIVRHTICLSKETHTNPESMKTGHPGQQCLRVRSDDKILVSAGWDGRGRVYGAKSLAKLAVLKYHSETCNCAAIQPGSNLIALGSKDSRISLWQIY.

WD repeat units lie at residues 12–50, 53–91, 188–230, 245–284, 292–330, and 333–365; these read GHLS…PTHI, AHTK…GGSH, EKTG…QKVN, VHKE…ETHT, GHPG…KLAV, and YHSE…WQIY.

This sequence belongs to the WD repeat ASA1 family. In terms of assembly, component of the ASTRA chromatin remodeling machinery complex.

It localises to the nucleus. Functionally, component of the ASTRA complex involved in chromatin remodeling. This is ASTRA-associated protein 1 (asa1) from Schizosaccharomyces japonicus (strain yFS275 / FY16936) (Fission yeast).